The primary structure comprises 116 residues: Holo-[acyl-carrier-protein] synthase (116 aa).

Asp8 and Glu50 together coordinate Mg(2+).

It belongs to the P-Pant transferase superfamily. AcpS family. Mg(2+) serves as cofactor.

The protein resides in the cytoplasm. The catalysed reaction is apo-[ACP] + CoA = holo-[ACP] + adenosine 3',5'-bisphosphate + H(+). In terms of biological role, transfers the 4'-phosphopantetheine moiety from coenzyme A to a Ser of acyl-carrier-protein. The sequence is that of Holo-[acyl-carrier-protein] synthase from Beutenbergia cavernae (strain ATCC BAA-8 / DSM 12333 / CCUG 43141 / JCM 11478 / NBRC 16432 / NCIMB 13614 / HKI 0122).